Reading from the N-terminus, the 732-residue chain is Elongation factor 2 (732 aa).

Residues Glu-19–Leu-260 enclose the tr-type G domain. GTP-binding positions include Ala-28 to Thr-35, Asp-94 to His-98, and Asn-148 to Asp-151. His-597 carries the post-translational modification Diphthamide.

It belongs to the TRAFAC class translation factor GTPase superfamily. Classic translation factor GTPase family. EF-G/EF-2 subfamily.

It localises to the cytoplasm. Functionally, catalyzes the GTP-dependent ribosomal translocation step during translation elongation. During this step, the ribosome changes from the pre-translocational (PRE) to the post-translocational (POST) state as the newly formed A-site-bound peptidyl-tRNA and P-site-bound deacylated tRNA move to the P and E sites, respectively. Catalyzes the coordinated movement of the two tRNA molecules, the mRNA and conformational changes in the ribosome. The sequence is that of Elongation factor 2 from Thermococcus onnurineus (strain NA1).